Consider the following 429-residue polypeptide: MKKQNNLRSLAAQAVEQVVEQGQSLSNVLPPLQQKVADKDKALLQELCFGVLRTLSQLEWLINKLMSRPMTGKQRTVHYLIMVGFYQLLYTRVPPHAALAETVEGAVSIKRPQLKGLINGVLRQFQRQQETLLNEFATSDARFLHPGWLVKRLQNAYPTQWQRIIEANNQRPPMWLRVNRTHHTRDGWLGLLEDAGMKGYPHPDYPDAVRLETPAPVHALPGFAEGWVTVQDASAQGCAVFLAPQNGEHILDLCAAPGGKTTHILEVAPEADVLAVDIDEQRLSRVYDNLKRLGMKATVKQGDGRYPAQWCGEQQFDRILLDAPCSATGVIRRHPDIKWLRRDRDIAELAQLQAEILDTVWPRLKPGGTLVYATCSVLPEENRDQIKTFLQRTPDAALSETGTPDQPGQQNLPGGEEGDGFFYAKLIKK.

S-adenosyl-L-methionine-binding positions include 254 to 260 (CAAPGGK), Asp-277, Asp-303, and Asp-322. Cys-375 serves as the catalytic Nucleophile. A disordered region spans residues 397 to 419 (ALSETGTPDQPGQQNLPGGEEGD). Residues 400 to 412 (ETGTPDQPGQQNL) are compositionally biased toward polar residues.

Belongs to the class I-like SAM-binding methyltransferase superfamily. RsmB/NOP family.

It is found in the cytoplasm. It catalyses the reaction cytidine(967) in 16S rRNA + S-adenosyl-L-methionine = 5-methylcytidine(967) in 16S rRNA + S-adenosyl-L-homocysteine + H(+). In terms of biological role, specifically methylates the cytosine at position 967 (m5C967) of 16S rRNA. The polypeptide is Ribosomal RNA small subunit methyltransferase B (Salmonella paratyphi A (strain ATCC 9150 / SARB42)).